The primary structure comprises 211 residues: LexA repressor (211 aa).

The segment at residues 27-47 (QTEIARAFGFKGVRAVQHHLD) is a DNA-binding region (H-T-H motif). Active-site for autocatalytic cleavage activity residues include serine 131 and lysine 168.

Belongs to the peptidase S24 family. In terms of assembly, homodimer.

The enzyme catalyses Hydrolysis of Ala-|-Gly bond in repressor LexA.. Its function is as follows. Represses a number of genes involved in the response to DNA damage (SOS response), including recA and lexA. In the presence of single-stranded DNA, RecA interacts with LexA causing an autocatalytic cleavage which disrupts the DNA-binding part of LexA, leading to derepression of the SOS regulon and eventually DNA repair. The chain is LexA repressor from Xylella fastidiosa (strain M12).